We begin with the raw amino-acid sequence, 239 residues long: Small ribosomal subunit protein uS3 (239 aa).

Positions 39–107 constitute a KH type-2 domain; sequence VRQVLRKKMS…PVHINVIEVR (69 aa). The tract at residues 214-239 is disordered; that stretch reads SQEKQDDGSRGDRNADRSSRRSREVR. The segment covering 216–239 has biased composition (basic and acidic residues); the sequence is EKQDDGSRGDRNADRSSRRSREVR.

This sequence belongs to the universal ribosomal protein uS3 family. Part of the 30S ribosomal subunit. Forms a tight complex with proteins S10 and S14.

Binds the lower part of the 30S subunit head. Binds mRNA in the 70S ribosome, positioning it for translation. The polypeptide is Small ribosomal subunit protein uS3 (Xylella fastidiosa (strain M23)).